A 101-amino-acid chain; its full sequence is Signal recognition particle 19 kDa protein (101 aa).

The protein belongs to the SRP19 family. Part of the signal recognition particle protein translocation system, which is composed of SRP and FtsY. Archaeal SRP consists of a 7S RNA molecule of 300 nucleotides and two protein subunits: SRP54 and SRP19.

It is found in the cytoplasm. In terms of biological role, involved in targeting and insertion of nascent membrane proteins into the cytoplasmic membrane. Binds directly to 7S RNA and mediates binding of the 54 kDa subunit of the SRP. This Methanosarcina barkeri (strain Fusaro / DSM 804) protein is Signal recognition particle 19 kDa protein.